The primary structure comprises 251 residues: Methionine aminopeptidase (251 aa).

H76 provides a ligand contact to substrate. A divalent metal cation contacts are provided by D93, D104, and H168. H175 is a substrate binding site. A divalent metal cation contacts are provided by E202 and E233.

This sequence belongs to the peptidase M24A family. Methionine aminopeptidase type 1 subfamily. In terms of assembly, monomer. It depends on Co(2+) as a cofactor. The cofactor is Zn(2+). Mn(2+) serves as cofactor. Requires Fe(2+) as cofactor.

The enzyme catalyses Release of N-terminal amino acids, preferentially methionine, from peptides and arylamides.. Its function is as follows. Removes the N-terminal methionine from nascent proteins. The N-terminal methionine is often cleaved when the second residue in the primary sequence is small and uncharged (Met-Ala-, Cys, Gly, Pro, Ser, Thr, or Val). Requires deformylation of the N(alpha)-formylated initiator methionine before it can be hydrolyzed. This Staphylococcus epidermidis (strain ATCC 12228 / FDA PCI 1200) protein is Methionine aminopeptidase.